We begin with the raw amino-acid sequence, 175 residues long: Rubredoxin-1 (175 aa).

Rubredoxin-like domains lie at 1-53 and 119-170; these read MARY…FVLI and FLKW…YVLY. 8 residues coordinate Fe cation: cysteine 6, cysteine 9, cysteine 39, cysteine 42, cysteine 124, cysteine 127, cysteine 157, and cysteine 160.

Belongs to the rubredoxin family. The cofactor is Fe(3+).

It localises to the cytoplasm. The protein operates within hydrocarbon metabolism; alkane degradation. Functionally, involved in the hydrocarbon hydroxylating system, which transfers electrons from NADH to rubredoxin reductase and then through rubredoxin to alkane 1 monooxygenase. In Pseudomonas putida (Arthrobacter siderocapsulatus), this protein is Rubredoxin-1 (alkG).